The chain runs to 292 residues: ATP synthase gamma chain (292 aa).

The protein belongs to the ATPase gamma chain family. As to quaternary structure, F-type ATPases have 2 components, CF(1) - the catalytic core - and CF(0) - the membrane proton channel. CF(1) has five subunits: alpha(3), beta(3), gamma(1), delta(1), epsilon(1). CF(0) has three main subunits: a, b and c.

The protein localises to the cell inner membrane. Its function is as follows. Produces ATP from ADP in the presence of a proton gradient across the membrane. The gamma chain is believed to be important in regulating ATPase activity and the flow of protons through the CF(0) complex. The chain is ATP synthase gamma chain from Hyphomonas neptunium (strain ATCC 15444).